We begin with the raw amino-acid sequence, 93 residues long: MSGLRVYSTSVTGSREIKSQQSEVTRILDGKRIQYQLVDISQDNALRDEMRTLAGNPKATPPQIVNGDHYCGDYELFVEAVEQNTLQEFLKLA.

Residue Ser2 is modified to N-acetylserine. In terms of domain architecture, Glutaredoxin spans 2 to 93 (SGLRVYSTSV…NTLQEFLKLA (92 aa)). Residue Thr9 is glycosylated (O-linked (GalNAc...) threonine).

Belongs to the SH3BGR family. As to quaternary structure, interacts with MYO1C (via its IQ motifs); the interaction is dependent on calcium and takes place at membrane ruffles. In terms of processing, may be glycosylated. In terms of tissue distribution, expressed in heart, liver, lung, kidney, spleen, thymus, ovarian follicles, skeletal muscle, brain, lymph node and mammary epithelial and stromal cells (at protein level).

Its subcellular location is the cytoplasm. The protein localises to the cytosol. The protein resides in the cell projection. It is found in the ruffle membrane. It localises to the nucleus. In terms of biological role, could act as a modulator of glutaredoxin biological activity. May play a role in cytoskeleton organization. The sequence is that of SH3 domain-binding glutamic acid-rich-like protein 3 from Rattus norvegicus (Rat).